The chain runs to 657 residues: Interferon-induced GTP-binding protein Mx1 (657 aa).

At M1 the chain carries N-acetylmethionine. Residues 63 to 336 form the Dynamin-type G domain; it reads DLALPAIAVI…LITHICKTLP (274 aa). The segment at 73 to 80 is G1 motif; it reads GDQSSGKS. 73 to 80 contacts GTP; sequence GDQSSGKS. Residues 98-100 form a G2 motif region; sequence VTR. The G3 motif stretch occupies residues 174-177; it reads DLPG. Residues 174–178 and 243–246 contribute to the GTP site; these read DLPGI and TKPD. Residues 243 to 246 form a G4 motif region; it reads TKPD. The segment at 275 to 278 is G5 motif; sequence KCRG. The tract at residues 337–362 is bundle signaling element (BSE); the sequence is LLENQIKENHEKITEELQKYGSDVPE. A middle domain region spans residues 362-529; the sequence is EDEHEKMFFL…HFQMEQIVYC (168 aa). Residues 363 to 627 form a stalk region; it reads DEHEKMFFLI…KDTYSWLLKE (265 aa). Positions 540-551 are enriched in basic and acidic residues; it reads RVREKDSDEEKK. The interval 540–559 is disordered; the sequence is RVREKDSDEEKKKKTSSMSH. The segment at 550–553 is critical for lipid-binding; the sequence is KKKK. A GED domain is found at 569–657; it reads LSEILEHLLA…ARRRLAKFPG (89 aa).

It belongs to the TRAFAC class dynamin-like GTPase superfamily. Dynamin/Fzo/YdjA family. As to quaternary structure, homooligomer. Oligomerizes into multimeric filamentous or ring-like structures by virtue of its stalk domain. Oligomerization is critical for GTPase activity, protein stability, and recognition of viral target structures. Interacts with TRPC1, TRPC3, TRPC4, TRPC5, TRPC6 and TRPC7. Interacts with HSPA5. Interacts with TUBB/TUBB5. Interacts with DDX39A and DDX39B. In terms of processing, ISGylated.

It localises to the cytoplasm. It is found in the endoplasmic reticulum membrane. Its subcellular location is the perinuclear region. Functionally, interferon-induced dynamin-like GTPase with antiviral activity. The polypeptide is Interferon-induced GTP-binding protein Mx1 (MX1) (Canis lupus familiaris (Dog)).